The following is a 546-amino-acid chain: SusD-like protein BACOVA_02651 (546 aa).

The first 21 residues, 1-21, serve as a signal peptide directing secretion; that stretch reads MRIFMKSKLLVIATTALLFAA. The N-palmitoyl cysteine moiety is linked to residue C22. Residue C22 is the site of S-diacylglycerol cysteine attachment.

Belongs to the SusD family.

It is found in the cell outer membrane. The protein operates within glucan metabolism; xyloglucan degradation. Polysaccharide-binding protein present at the surface of the cell. Probably mediates xyloglucan-binding before xyloglucan transport in the periplasm for degradation. This Bacteroides ovatus (strain ATCC 8483 / DSM 1896 / JCM 5824 / BCRC 10623 / CCUG 4943 / NCTC 11153) protein is SusD-like protein BACOVA_02651.